Here is a 585-residue protein sequence, read N- to C-terminus: Efflux pump dotC (585 aa).

The segment covering 1–34 (MSEDHTKADNLSEKDPHSPERSDSSSHEDAHARE) has biased composition (basic and acidic residues). Residues 1 to 45 (MSEDHTKADNLSEKDPHSPERSDSSSHEDAHAREEEESSDDDGAL) form a disordered region. Asn-10 carries N-linked (GlcNAc...) asparagine glycosylation. Residues 35-44 (EEESSDDDGA) show a composition bias toward acidic residues. A helical membrane pass occupies residues 51-71 (SLIAIVMIALSLIGLQLAVFL). Residue Asn-91 is glycosylated (N-linked (GlcNAc...) asparagine). A run of 13 helical transmembrane segments spans residues 94 to 114 (AAYT…TPIW), 132 to 152 (ALFM…MLIT), 158 to 178 (GAAG…LFSL), 186 to 206 (GMIG…GGAF), 214 to 234 (WCFY…FFFL), 247 to 267 (FAAI…MFLF), 280 to 300 (SATV…FGLV), 323 to 343 (ALLV…YLPL), 353 to 373 (PILA…SAAA), 385 to 405 (LIPM…LINF), 414 to 434 (LIIY…APLV), 449 to 471 (TATF…QVLY), and 524 to 544 (SPMW…ILLV). A disordered region spans residues 564-585 (KKAEAERKAERQAKDLEKAQKS).

It belongs to the major facilitator superfamily. TCR/Tet family.

The protein resides in the cell membrane. It is found in the vacuole membrane. Functionally, efflux pump; part of the gene cluster that mediates the biosynthesis of dothistromin (DOTH), a polyketide toxin very similar in structure to the aflatoxin precursor, versicolorin B. One function of dotC may be to transport early-stage dothistromin biosynthetic intermediates from the cytoplasm into vacuoles, thereby affecting the rate of dothistromin production. This Dothistroma septosporum (Red band needle blight fungus) protein is Efflux pump dotC.